Consider the following 484-residue polypeptide: UDP-N-acetylmuramoyl-L-alanyl-D-glutamate--2,6-diaminopimelate ligase (484 aa).

Ser-29 provides a ligand contact to UDP-N-acetyl-alpha-D-muramoyl-L-alanyl-D-glutamate. 108 to 114 contacts ATP; the sequence is GTSGKTS. UDP-N-acetyl-alpha-D-muramoyl-L-alanyl-D-glutamate-binding positions include 150–151, Ser-177, Gln-183, and Arg-185; that span reads TT. Lys-217 carries the N6-carboxylysine modification. Meso-2,6-diaminopimelate-binding positions include Arg-381, 405 to 408, Gly-453, and Glu-457; that span reads DNPR. A Meso-diaminopimelate recognition motif motif is present at residues 405–408; sequence DNPR.

This sequence belongs to the MurCDEF family. MurE subfamily. It depends on Mg(2+) as a cofactor. Carboxylation is probably crucial for Mg(2+) binding and, consequently, for the gamma-phosphate positioning of ATP.

The protein resides in the cytoplasm. The catalysed reaction is UDP-N-acetyl-alpha-D-muramoyl-L-alanyl-D-glutamate + meso-2,6-diaminopimelate + ATP = UDP-N-acetyl-alpha-D-muramoyl-L-alanyl-gamma-D-glutamyl-meso-2,6-diaminopimelate + ADP + phosphate + H(+). The protein operates within cell wall biogenesis; peptidoglycan biosynthesis. Functionally, catalyzes the addition of meso-diaminopimelic acid to the nucleotide precursor UDP-N-acetylmuramoyl-L-alanyl-D-glutamate (UMAG) in the biosynthesis of bacterial cell-wall peptidoglycan. The protein is UDP-N-acetylmuramoyl-L-alanyl-D-glutamate--2,6-diaminopimelate ligase of Mesorhizobium japonicum (strain LMG 29417 / CECT 9101 / MAFF 303099) (Mesorhizobium loti (strain MAFF 303099)).